A 223-amino-acid polypeptide reads, in one-letter code: Ribonuclease DdI (223 aa).

Positions 1 to 25 (MRLIAALLSVLLIASTAQSTVTIYE) are cleaved as a signal peptide. Cys-46 and Cys-51 are disulfide-bonded. Active-site residues include His-63, Glu-113, and His-117. Cys-78 and Cys-120 are joined by a disulfide. A glycan (N-linked (GlcNAc...) asparagine) is linked at Asn-144. Intrachain disulfides connect Cys-183-Cys-213 and Cys-194-Cys-205.

The protein belongs to the RNase T2 family.

The protein localises to the lysosome. It catalyses the reaction a ribonucleotidyl-ribonucleotide-RNA + H2O = a 3'-end 3'-phospho-ribonucleotide-RNA + a 5'-end dephospho-ribonucleoside-RNA + H(+). With respect to regulation, inhibited by Cu(2+) and Zn(2+). In terms of biological role, releases mononucleotides from RNA in the order of 3'-GMP &gt; 3'-UMP &gt; 3'-AMP &gt; 3'-CMP. This chain is Ribonuclease DdI (ddiA), found in Dictyostelium discoideum (Social amoeba).